The chain runs to 722 residues: Solute carrier organic anion transporter family member 4C1 (722 aa).

The interval M1 to E81 is disordered. Residues M1–Q101 lie on the Cytoplasmic side of the membrane. 2 positions are modified to phosphoserine: S15 and S16. At T19 the chain carries Phosphothreonine. S24, S26, and S28 each carry phosphoserine. The span at A25 to P46 shows a compositional bias: polar residues. Residues G102 to V122 form a helical membrane-spanning segment. Topologically, residues N123–G141 are extracellular. Residues L142–G162 traverse the membrane as a helical segment. The Cytoplasmic portion of the chain corresponds to E163–P168. The chain crosses the membrane as a helical span at residues R169–G193. Residues R194–S218 lie on the Extracellular side of the membrane. A helical membrane pass occupies residues L219–I249. Topologically, residues D250 to S269 are cytoplasmic. Residues I270–I290 form a helical membrane-spanning segment. The Extracellular portion of the chain corresponds to A291–L306. A helical transmembrane segment spans residues G307–P331. Over K332–N376 the chain is Cytoplasmic. The helical transmembrane segment at L377–T398 threads the bilayer. Residues G399–F418 lie on the Extracellular side of the membrane. A helical membrane pass occupies residues A419–V442. Residues S443–K446 lie on the Cytoplasmic side of the membrane. A helical transmembrane segment spans residues M447–F470. Residues I471–F578 are Extracellular-facing. One can recognise a Kazal-like domain in the interval G494–E549. 3 cysteine pairs are disulfide-bonded: C500/C530, C506/C526, and C515/C547. Residues L579–L601 traverse the membrane as a helical segment. Residues R602–S610 are Cytoplasmic-facing. A helical membrane pass occupies residues L611–I636. The Extracellular portion of the chain corresponds to D637 to S670. The chain crosses the membrane as a helical span at residues V671–Y688. At K689–G722 the chain is on the cytoplasmic side.

The protein belongs to the organo anion transporter (TC 2.A.60) family. As to expression, strongly expressed in initial segment of epididymis and seminal vesicles.

It localises to the basolateral cell membrane. The catalysed reaction is estrone 3-sulfate(out) = estrone 3-sulfate(in). The enzyme catalyses L-thyroxine(out) = L-thyroxine(in). It catalyses the reaction 3,3',5-triiodo-L-thyronine(out) = 3,3',5-triiodo-L-thyronine(in). It carries out the reaction chenodeoxycholate(out) = chenodeoxycholate(in). The catalysed reaction is glycocholate(out) = glycocholate(in). The enzyme catalyses L-homoarginine(in) = L-homoarginine(out). It catalyses the reaction L-arginine(in) = L-arginine(out). It carries out the reaction N(omega),N(omega)-dimethyl-L-arginine(out) = N(omega),N(omega)-dimethyl-L-arginine(in). Mediates the transport of organic anions such as steroids (estrone 3-sulfate, chenodeoxycholate, glycocholate) and thyroid hormones (3,3',5-triiodo-L-thyronine (T3), L-thyroxine (T4)), in the kidney. Capable of transporting cAMP and pharmacological substances such as digoxin, ouabain and methotrexate. Transport is independent of sodium, chloride ion, and ATP. Transport activity is stimulated by an acidic extracellular environment due to increased substrate affinity to the transporter. The driving force for this transport activity is currently not known. The role of hydrogencarbonate (HCO3(-), bicarbonate) as the probable counteranion that exchanges for organic anions is still not well defined. Functions as an uptake transporter at the apical membrane, suggesting a role in renal reabsorption. Involved in the renal secretion of the uremic toxin ADMA (N(omega),N(omega)-dimethyl-L-arginine or asymmetrical dimethylarginine), which is associated to cardiovascular events and mortality, and the structurally related amino acids L-arginine and L-homoarginine (a cardioprotective biomarker). Can act bidirectionally, suggesting a dual protective role of this transport protein; exporting L-homoarginine after being synthesized in proximal tubule cells, and mediating uptake of ADMA from the blood into proximal tubule cells where it is degraded by the enzyme dimethylarginine dimethylaminohydrolase 1 (DDAH1). May be involved in sperm maturation by enabling directed movement of organic anions and compounds within or between cells. This ion-transporting process is important to maintain the strict epididymal homeostasis necessary for sperm maturation. May have a role in secretory functions since seminal vesicle epithelial cells are assumed to secrete proteins involved in decapacitation by modifying surface proteins to facilitate the acquisition of the ability to fertilize the egg. The protein is Solute carrier organic anion transporter family member 4C1 of Mus musculus (Mouse).